The sequence spans 92 residues: MKLGVTVLSVALLVAALCPPALSAPMGSDPPTACCFSYTLRKLPRHFVIDYFETTSLCSQPAVVFQTKKGRQVCANPSESWVQEYVDDLELN.

Positions 1-23 (MKLGVTVLSVALLVAALCPPALS) are cleaved as a signal peptide. 2 cysteine pairs are disulfide-bonded: C34/C58 and C35/C74.

The protein belongs to the intercrine beta (chemokine CC) family. Homodimer.

It is found in the secreted. Functionally, monokine with inflammatory and chemokinetic properties. The polypeptide is C-C motif chemokine 4 (CCL4) (Oryctolagus cuniculus (Rabbit)).